The sequence spans 523 residues: NAD(P)H-quinone oxidoreductase subunit 2 (523 aa).

13 consecutive transmembrane segments (helical) span residues 29–49 (AVLP…VDLA), 57–77 (WVPP…ALQW), 94–114 (LAVA…LISW), 132–152 (LAAT…SIFI), 182–202 (LLVG…LYGL), 221–241 (PIAA…IAAV), 255–275 (PTPV…ALAL), 291–311 (LLFT…ALAQ), 317–337 (MLAY…VCGT), 345–365 (VLYM…IILF), 389–409 (LGLS…GFFG), 424–444 (LLVV…ISVI), and 477–497 (VALI…NPLF).

Belongs to the complex I subunit 2 family. As to quaternary structure, NDH-1 can be composed of about 15 different subunits; different subcomplexes with different compositions have been identified which probably have different functions.

The protein localises to the cellular thylakoid membrane. The catalysed reaction is a plastoquinone + NADH + (n+1) H(+)(in) = a plastoquinol + NAD(+) + n H(+)(out). The enzyme catalyses a plastoquinone + NADPH + (n+1) H(+)(in) = a plastoquinol + NADP(+) + n H(+)(out). NDH-1 shuttles electrons from an unknown electron donor, via FMN and iron-sulfur (Fe-S) centers, to quinones in the respiratory and/or the photosynthetic chain. The immediate electron acceptor for the enzyme in this species is believed to be plastoquinone. Couples the redox reaction to proton translocation, and thus conserves the redox energy in a proton gradient. Cyanobacterial NDH-1 also plays a role in inorganic carbon-concentration. This Synechococcus sp. (strain CC9902) protein is NAD(P)H-quinone oxidoreductase subunit 2.